The sequence spans 265 residues: MKKVTTSTLLKMKQQSEKISALTAYDASFSKLFDEQGIDVLLIGDSLGMVLQGCDDTLGVSIDDVAYHTRAVRKGVERAFVIADMPFMSYSTPEQTYLNAAKLMAAGASMVKLEGGRWLLESIQGLNERGVPVCGHLGLTPQSVHVFGGFKVQGRDDLQAEQMLEQAKEMAAAGIQLLVLECVPTELAGAISQAVDIPVIGIGAGPETDGQILVMHDMFGISANYMPKFSKNYLQETGDMRTAVSQYIEEVKDGSFPSEAHSFSK.

The Mg(2+) site is built by Asp-45 and Asp-84. 3-methyl-2-oxobutanoate-binding positions include 45–46 (DS), Asp-84, and Lys-112. Glu-114 provides a ligand contact to Mg(2+). Residue Glu-181 is the Proton acceptor of the active site.

Belongs to the PanB family. Homodecamer; pentamer of dimers. It depends on Mg(2+) as a cofactor.

The protein resides in the cytoplasm. The catalysed reaction is 3-methyl-2-oxobutanoate + (6R)-5,10-methylene-5,6,7,8-tetrahydrofolate + H2O = 2-dehydropantoate + (6S)-5,6,7,8-tetrahydrofolate. Its pathway is cofactor biosynthesis; (R)-pantothenate biosynthesis; (R)-pantoate from 3-methyl-2-oxobutanoate: step 1/2. Its function is as follows. Catalyzes the reversible reaction in which hydroxymethyl group from 5,10-methylenetetrahydrofolate is transferred onto alpha-ketoisovalerate to form ketopantoate. This Pseudoalteromonas atlantica (strain T6c / ATCC BAA-1087) protein is 3-methyl-2-oxobutanoate hydroxymethyltransferase.